The primary structure comprises 318 residues: tRNA-cytidine(32) 2-sulfurtransferase (318 aa).

The short motif at 52–57 is the PP-loop motif element; the sequence is SGGKDS. 3 residues coordinate [4Fe-4S] cluster: C127, C130, and C218.

Belongs to the TtcA family. In terms of assembly, homodimer. Mg(2+) is required as a cofactor. Requires [4Fe-4S] cluster as cofactor.

The protein localises to the cytoplasm. The catalysed reaction is cytidine(32) in tRNA + S-sulfanyl-L-cysteinyl-[cysteine desulfurase] + AH2 + ATP = 2-thiocytidine(32) in tRNA + L-cysteinyl-[cysteine desulfurase] + A + AMP + diphosphate + H(+). It functions in the pathway tRNA modification. In terms of biological role, catalyzes the ATP-dependent 2-thiolation of cytidine in position 32 of tRNA, to form 2-thiocytidine (s(2)C32). The sulfur atoms are provided by the cysteine/cysteine desulfurase (IscS) system. The sequence is that of tRNA-cytidine(32) 2-sulfurtransferase from Actinobacillus pleuropneumoniae serotype 3 (strain JL03).